Reading from the N-terminus, the 276-residue chain is MTSRWTTAVLDTDQPGGWAVARSPEGFLFDDNGVLFPREWLKRQDLSILAEHGIGHLDGEPVYLLELHSTSEVPGCNWKGLRAFMLDGDHTIYKVLGYAAQIGTWAREHRFCGNCGQAMTQVPRERAMYCQPCDLRSYPRISPSMIVLVTRGDEVLLARSPRFVTGVYSTLAGFAEPGESAEDCLIREVREEVQIEVKNIQYMGSQCWPFPHSMMLGFHAEYAGGEIVCQEDEIEDAQWFNVHDLPPLPASKSIARYLIDVYVARRLGHAEPVLPG.

Arg82 provides a ligand contact to substrate. Residues Cys112 and Cys115 each contribute to the Zn(2+) site. Glu125 lines the substrate pocket. Zn(2+)-binding residues include Cys130 and Cys133. Residue Tyr138 coordinates substrate. Positions 139 to 262 (PRISPSMIVL…SIARYLIDVY (124 aa)) constitute a Nudix hydrolase domain. A divalent metal cation-binding residues include Ala172, Glu188, and Glu192. Residues 173-194 (GFAEPGESAEDCLIREVREEVQ) carry the Nudix box motif. Position 206–213 (206–213 (QCWPFPHS)) interacts with substrate. A divalent metal cation is bound at residue Glu233. Ala255 contributes to the substrate binding site.

It belongs to the Nudix hydrolase family. NudC subfamily. In terms of assembly, homodimer. It depends on Mg(2+) as a cofactor. Mn(2+) is required as a cofactor. Zn(2+) serves as cofactor.

The catalysed reaction is a 5'-end NAD(+)-phospho-ribonucleoside in mRNA + H2O = a 5'-end phospho-adenosine-phospho-ribonucleoside in mRNA + beta-nicotinamide D-ribonucleotide + 2 H(+). It carries out the reaction NAD(+) + H2O = beta-nicotinamide D-ribonucleotide + AMP + 2 H(+). It catalyses the reaction NADH + H2O = reduced beta-nicotinamide D-ribonucleotide + AMP + 2 H(+). MRNA decapping enzyme that specifically removes the nicotinamide adenine dinucleotide (NAD) cap from a subset of mRNAs by hydrolyzing the diphosphate linkage to produce nicotinamide mononucleotide (NMN) and 5' monophosphate mRNA. The NAD-cap is present at the 5'-end of some mRNAs and stabilizes RNA against 5'-processing. Has preference for mRNAs with a 5'-end purine. Catalyzes the hydrolysis of a broad range of dinucleotide pyrophosphates. This is NAD-capped RNA hydrolase NudC from Pseudomonas fluorescens (strain Pf0-1).